Reading from the N-terminus, the 511-residue chain is MRSIKLHRLLDLVGIIPSLDLIDKEINNISFNSKEVQKGTLFLGMPGLNVDGGKYCIEAIENGAEAAIIGSAAKQKIGSIDRERILVIEDNLDYIFGQIVSEFWNRPSRKLKLIGVTGTNGKTTITFLLEYLLKKLGKKTALFGTLFNRWPGFSEVASHTTDFADKLQKKLNAAVDAESEFAILEVSSHSIAQNRISGCEFEAAIFTNLTQDHLDYHSDMESYFQTKRKLFFPPYLKDKDGISVLNHDDLWISKLSSDLEKRSSLVSTKITKSEFKNDGFFYVTDKQFTESGSTCIFHTPKEKIKLFVPLVGEFNLMNAIQAITILYKLNFSLKDLSKLIQSFPGAPGRMEKIEIDNNDVSRSLPIVIIDYAHTPDGLKKVLQSIKKLCKGKLITVFGCGGDRDRSKRPLMGSIAEEFSDHVFITSDNPRSEEPQQIVNDILMGIEKREKITFDIDRFKAINESIKFANKEDIVLIAGKGHEDYQILNDKVINFDDRKIAQKLLQEKSKSK.

Residue Ser33 coordinates UDP-N-acetyl-alpha-D-muramoyl-L-alanyl-D-glutamate. 118-124 (GTNGKTT) contributes to the ATP binding site. UDP-N-acetyl-alpha-D-muramoyl-L-alanyl-D-glutamate contacts are provided by residues 160–161 (TT), Ser187, Gln193, and Arg195. Lys227 carries the post-translational modification N6-carboxylysine. Meso-2,6-diaminopimelate is bound by residues Arg403, 427 to 430 (DNPR), Gly478, and Glu482. Residues 427–430 (DNPR) carry the Meso-diaminopimelate recognition motif motif.

Belongs to the MurCDEF family. MurE subfamily. Mg(2+) serves as cofactor. Post-translationally, carboxylation is probably crucial for Mg(2+) binding and, consequently, for the gamma-phosphate positioning of ATP.

The protein localises to the cytoplasm. It carries out the reaction UDP-N-acetyl-alpha-D-muramoyl-L-alanyl-D-glutamate + meso-2,6-diaminopimelate + ATP = UDP-N-acetyl-alpha-D-muramoyl-L-alanyl-gamma-D-glutamyl-meso-2,6-diaminopimelate + ADP + phosphate + H(+). It participates in cell wall biogenesis; peptidoglycan biosynthesis. Its function is as follows. Catalyzes the addition of meso-diaminopimelic acid to the nucleotide precursor UDP-N-acetylmuramoyl-L-alanyl-D-glutamate (UMAG) in the biosynthesis of bacterial cell-wall peptidoglycan. This Prochlorococcus marinus subsp. pastoris (strain CCMP1986 / NIES-2087 / MED4) protein is UDP-N-acetylmuramoyl-L-alanyl-D-glutamate--2,6-diaminopimelate ligase.